Consider the following 317-residue polypeptide: Ret finger protein-like 3 (317 aa).

Residues Cys-40–Ser-82 form an RING-type zinc finger. One can recognise a B30.2/SPRY domain in the interval Glu-107–Leu-301.

Expressed during neurogenesis in differentiating human embryonic stem cells and in the developing human neocortex.

The protein localises to the cytoplasm. It localises to the nucleus. Its function is as follows. (Microbial infection) Stimulates the activity of Human Immunodeficiency Virus 1/HIV-1 pre-integration complex. The polypeptide is Ret finger protein-like 3 (RFPL3) (Homo sapiens (Human)).